The chain runs to 312 residues: Ribosomal RNA small subunit methyltransferase H (312 aa).

S-adenosyl-L-methionine is bound by residues 35-37 (GGH), Asp-54, Phe-81, Asp-100, and Gln-107.

It belongs to the methyltransferase superfamily. RsmH family.

The protein resides in the cytoplasm. It carries out the reaction cytidine(1402) in 16S rRNA + S-adenosyl-L-methionine = N(4)-methylcytidine(1402) in 16S rRNA + S-adenosyl-L-homocysteine + H(+). Specifically methylates the N4 position of cytidine in position 1402 (C1402) of 16S rRNA. The protein is Ribosomal RNA small subunit methyltransferase H of Campylobacter jejuni subsp. jejuni serotype O:2 (strain ATCC 700819 / NCTC 11168).